Reading from the N-terminus, the 197-residue chain is dTTP/UTP pyrophosphatase (197 aa).

Asp-69 serves as the catalytic Proton acceptor.

This sequence belongs to the Maf family. YhdE subfamily. A divalent metal cation is required as a cofactor.

The protein localises to the cytoplasm. The catalysed reaction is dTTP + H2O = dTMP + diphosphate + H(+). The enzyme catalyses UTP + H2O = UMP + diphosphate + H(+). Nucleoside triphosphate pyrophosphatase that hydrolyzes dTTP and UTP. May have a dual role in cell division arrest and in preventing the incorporation of modified nucleotides into cellular nucleic acids. This chain is dTTP/UTP pyrophosphatase, found in Lachnoclostridium phytofermentans (strain ATCC 700394 / DSM 18823 / ISDg) (Clostridium phytofermentans).